The chain runs to 238 residues: Protein FEV (238 aa).

A DNA-binding region (ETS) is located at residues 47-127 (IQLWQFLLEL…HGKRYAYRFD (81 aa)). A may mediate active transcriptional repression region spans residues 129–238 (QGLAQACQPP…AASHLGGHYH (110 aa)).

The protein belongs to the ETS family. In terms of tissue distribution, in brain, exclusively expressed in the major serotonergic neurons of the dorsal and median raphe nuclei located in the midbrain and pons. Also detected in prostate and small intestine.

The protein resides in the nucleus. Functionally, functions as a transcriptional regulator. According to PubMed:12761502, it functions as a transcriptional repressor. Functions in the differentiation and the maintenance of the central serotonergic neurons. May play a role in cell growth. The sequence is that of Protein FEV (FEV) from Homo sapiens (Human).